A 1003-amino-acid polypeptide reads, in one-letter code: Translation initiation factor IF-2 (1003 aa).

Residues 36-392 (SSTIEPPVVK…RQKRNEYESM (357 aa)) form a disordered region. Over residues 62 to 151 (AAKPAAAKPA…PKPAAAAKPA (90 aa)) the composition is skewed to low complexity. Pro residues-rich tracts occupy residues 178–190 (DGMP…PAPK) and 213–230 (PRPG…PGGG). Gly residues-rich tracts occupy residues 231–243 (PRPQ…GGQR) and 255–271 (GNRG…GPRP). A compositionally biased stretch (low complexity) spans 273–286 (GGPRPQGGSRPQGG). Residues 329–372 (GKGGRGGQAGGGAGGGFNRGGGTGGGAGRGGRRGGTAGAFGRPG) are compositionally biased toward gly residues. Basic residues predominate over residues 376 to 385 (RRGRKSKRQK). The region spanning 498-670 (KRPPVVTVMG…VCLTADAELD (173 aa)) is the tr-type G domain. Positions 507–514 (GHVDHGKT) are G1. 507–514 (GHVDHGKT) serves as a coordination point for GTP. Residues 532–536 (GITQG) are G2. Positions 557–560 (DTPG) are G3. Residues 557 to 561 (DTPGH) and 611 to 614 (NKID) contribute to the GTP site. The segment at 611 to 614 (NKID) is G4. The segment at 647–649 (SAK) is G5.

This sequence belongs to the TRAFAC class translation factor GTPase superfamily. Classic translation factor GTPase family. IF-2 subfamily.

It is found in the cytoplasm. One of the essential components for the initiation of protein synthesis. Protects formylmethionyl-tRNA from spontaneous hydrolysis and promotes its binding to the 30S ribosomal subunits. Also involved in the hydrolysis of GTP during the formation of the 70S ribosomal complex. In Corynebacterium glutamicum (strain R), this protein is Translation initiation factor IF-2.